An 82-amino-acid polypeptide reads, in one-letter code: uncharacterized protein (82 aa).

The protein belongs to the chlamydial CPn_0711/CT_665/TC_0036 family.

This is an uncharacterized protein from Chlamydia pneumoniae (Chlamydophila pneumoniae).